A 451-amino-acid polypeptide reads, in one-letter code: MTENETIFWNRILELAQSQLKQTTYEFFVLDARLVKVENQVATIYLDPMKELFWEQNLKDVILTAGFEVFNAHISVNYQFEDDLASEIEESTSNHIFSRQTINSLPAITSDLNPKYSFDNFIQGDENRWAVAASLAVANTPGTTYNPLFIWGGPGLGKTHLLNAIGNAVLLDNPKARVKYITAENFINEFVIHIRLDTMDELKEKFRNLDLLLIDDIQSLAKKTLLGTQEEFFNTFNALHNNNKQIVLTSDRTPDHLNDLEQRLVTRFKWGLTVNITPPDFETRVAILTNKIQEYNFTFPQDTIEYLAGQFDSNVRDLEGALKDISLVANFKEIDKITVDIAAEAIRARKQDTPKMTIIPIEEIQTQVGKFYGVTVKEIKATKRTQNIVLARQVAMFLAREMTDNSLPKIGKEFGGRDHSTVLHAYNKIKNMIIEDESLRIEIETIKNKIK.

The interval 1–101 is domain I, interacts with DnaA modulators; that stretch reads MTENETIFWN…TSNHIFSRQT (101 aa). Positions 101–110 are domain II; that stretch reads TINSLPAITS. The tract at residues 111–329 is domain III, AAA+ region; it reads DLNPKYSFDN…GALKDISLVA (219 aa). The ATP site is built by glycine 155, glycine 157, lysine 158, and threonine 159. The tract at residues 330–451 is domain IV, binds dsDNA; that stretch reads NFKEIDKITV…EIETIKNKIK (122 aa).

The protein belongs to the DnaA family. In terms of assembly, oligomerizes as a right-handed, spiral filament on DNA at oriC.

The protein localises to the cytoplasm. Functionally, plays an essential role in the initiation and regulation of chromosomal replication. ATP-DnaA binds to the origin of replication (oriC) to initiate formation of the DNA replication initiation complex once per cell cycle. Binds the DnaA box (a 9 base pair repeat at the origin) and separates the double-stranded (ds)DNA. Forms a right-handed helical filament on oriC DNA; dsDNA binds to the exterior of the filament while single-stranded (ss)DNA is stabiized in the filament's interior. The ATP-DnaA-oriC complex binds and stabilizes one strand of the AT-rich DNA unwinding element (DUE), permitting loading of DNA polymerase. After initiation quickly degrades to an ADP-DnaA complex that is not apt for DNA replication. Binds acidic phospholipids. The polypeptide is Chromosomal replication initiator protein DnaA (Streptococcus uberis (strain ATCC BAA-854 / 0140J)).